Consider the following 354-residue polypeptide: Mycothiol acetyltransferase (354 aa).

Positions 1–18 (MMVDNQTPDSSTLSTAST) are enriched in polar residues. Residues 1-21 (MMVDNQTPDSSTLSTASTPVY) form a disordered region. N-acetyltransferase domains follow at residues 21–176 (YAEP…QTRE) and 191–354 (LRMR…EPAA). Residue Glu-52 participates in 1D-myo-inositol 2-(L-cysteinylamino)-2-deoxy-alpha-D-glucopyranoside binding. Residue 101–103 (AAV) coordinates acetyl-CoA. The 1D-myo-inositol 2-(L-cysteinylamino)-2-deoxy-alpha-D-glucopyranoside site is built by Glu-217, Lys-259, and Glu-274. Acetyl-CoA-binding positions include 278–280 (VGV) and 285–291 (QGGGLGR). Tyr-318 is a binding site for 1D-myo-inositol 2-(L-cysteinylamino)-2-deoxy-alpha-D-glucopyranoside.

Belongs to the acetyltransferase family. MshD subfamily. As to quaternary structure, monomer.

The catalysed reaction is 1D-myo-inositol 2-(L-cysteinylamino)-2-deoxy-alpha-D-glucopyranoside + acetyl-CoA = mycothiol + CoA + H(+). Functionally, catalyzes the transfer of acetyl from acetyl-CoA to desacetylmycothiol (Cys-GlcN-Ins) to form mycothiol. This Rothia mucilaginosa (strain DY-18) (Stomatococcus mucilaginosus) protein is Mycothiol acetyltransferase.